Consider the following 135-residue polypeptide: Large ribosomal subunit protein uL22 (135 aa).

Belongs to the universal ribosomal protein uL22 family. Part of the 50S ribosomal subunit.

This protein binds specifically to 23S rRNA; its binding is stimulated by other ribosomal proteins, e.g. L4, L17, and L20. It is important during the early stages of 50S assembly. It makes multiple contacts with different domains of the 23S rRNA in the assembled 50S subunit and ribosome. Its function is as follows. The globular domain of the protein is located near the polypeptide exit tunnel on the outside of the subunit, while an extended beta-hairpin is found that lines the wall of the exit tunnel in the center of the 70S ribosome. The chain is Large ribosomal subunit protein uL22 from Malacoplasma penetrans (strain HF-2) (Mycoplasma penetrans).